Reading from the N-terminus, the 461-residue chain is Lysosomal dipeptide transporter MFSD1 (461 aa).

Basic and acidic residues predominate over residues Met-1–Gly-13. The tract at residues Met-1–Lys-22 is disordered. The Dileucine internalization motif signature appears at Leu-10 to Leu-11. A run of 10 helical transmembrane segments spans residues Leu-37–Cys-57, Gln-81–Leu-101, Thr-111–Ala-131, Phe-134–Ala-154, Leu-264–Leu-284, Ala-302–Val-322, Trp-331–Trp-351, Leu-359–Val-379, Phe-390–Leu-410, and Leu-416–Leu-436.

This sequence belongs to the major facilitator superfamily. As to quaternary structure, homodimer. Interacts with lysosomal protein GLMP (via lumenal domain); the interaction starts while both proteins are still in the endoplasmic reticulum and is required for stabilization of MFSD1 in lysosomes but has no direct effect on its targeting to lysosomes or transporter activity.

It localises to the lysosome membrane. The enzyme catalyses L-alpha-aminoacyl-L-arginine(out) = L-alpha-aminoacyl-L-arginine(in). It catalyses the reaction L-arginyl-L-alpha-amino acid(out) = L-arginyl-L-alpha-amino acid(in). The catalysed reaction is L-arginyl-glycine(out) = L-arginyl-glycine(in). It carries out the reaction L-alpha-aminoacyl-L-lysine(out) = L-alpha-aminoacyl-L-lysine(in). The enzyme catalyses L-aspartyl-L-lysine(out) = L-aspartyl-L-lysine(in). It catalyses the reaction L-alanyl-L-lysine(out) = L-alanyl-L-lysine(in). The catalysed reaction is L-lysyl-L-alpha-amino acid(out) = L-lysyl-L-alpha-amino acid(in). It carries out the reaction L-lysyl-L-alanine(out) = L-lysyl-L-alanine(in). The enzyme catalyses L-lysyl-L-lysine(out) = L-lysyl-L-lysine(in). It catalyses the reaction L-lysyl-glycine(out) = L-lysyl-glycine(in). The catalysed reaction is L-alpha-aminoacyl-L-histidine(out) = L-alpha-aminoacyl-L-histidine(in). It carries out the reaction L-histidyl-L-alpha-amino acid(out) = L-histidyl-L-alpha-amino acid(in). The enzyme catalyses L-histidyl-glycine(out) = L-histidyl-glycine(in). Functionally, lysosomal dipeptide uniporter that selectively exports lysine, arginine or histidine-containing dipeptides with a net positive charge from the lysosome lumen into the cytosol. Could play a role in a specific type of protein O-glycosylation indirectly regulating macrophages migration and tissue invasion. Also essential for liver homeostasis. The polypeptide is Lysosomal dipeptide transporter MFSD1 (mfsd1) (Danio rerio (Zebrafish)).